A 90-amino-acid chain; its full sequence is Probable Fe(2+)-trafficking protein (90 aa).

The protein belongs to the Fe(2+)-trafficking protein family.

In terms of biological role, could be a mediator in iron transactions between iron acquisition and iron-requiring processes, such as synthesis and/or repair of Fe-S clusters in biosynthetic enzymes. This Saccharophagus degradans (strain 2-40 / ATCC 43961 / DSM 17024) protein is Probable Fe(2+)-trafficking protein.